A 657-amino-acid chain; its full sequence is Protein FAM200B (657 aa).

This sequence belongs to the FAM200 family.

The sequence is that of Protein FAM200B from Homo sapiens (Human).